Here is an 84-residue protein sequence, read N- to C-terminus: Large ribosomal subunit protein bL27 (84 aa).

Positions 1 to 21 (MAHKKGASSTRNGRDSNAQRL) are disordered. Residues 7–19 (ASSTRNGRDSNAQ) show a composition bias toward polar residues.

It belongs to the bacterial ribosomal protein bL27 family.

This is Large ribosomal subunit protein bL27 from Clavibacter sepedonicus (Clavibacter michiganensis subsp. sepedonicus).